The sequence spans 88 residues: Small ribosomal subunit protein bS20 (88 aa).

The disordered stretch occupies residues 1-27 (MANTASAKKMTRKIAKRTAINRSRRSR).

It belongs to the bacterial ribosomal protein bS20 family.

Binds directly to 16S ribosomal RNA. This chain is Small ribosomal subunit protein bS20, found in Methylobacterium radiotolerans (strain ATCC 27329 / DSM 1819 / JCM 2831 / NBRC 15690 / NCIMB 10815 / 0-1).